A 507-amino-acid chain; its full sequence is FLYWCH transcription factor 1 (507 aa).

Over residues 1–26 (MYSPESMNSNISSPSPPSSSSLNAPS) the composition is skewed to low complexity. Positions 1 to 51 (MYSPESMNSNISSPSPPSSSSLNAPSLADAPEVRSDDGEAETSEPSTSVTA) are disordered. The segment at 135–192 (KKTRLKVFSNGFFMTFDKLSSCQKKYFWRCEYKNTCKARMHTDIVTEKILTFIHEHNH) adopts an FLYWCH-type zinc-finger fold.

Its function is as follows. Probable transcription factor. Binds to the DNA sequence motif 5'-[AG]GGCGCCG-3' in the promoters of target genes, including micro-RNA genes, in order to repress expression, and acting redundantly with flh-2. The polypeptide is FLYWCH transcription factor 1 (Caenorhabditis elegans).